Consider the following 135-residue polypeptide: Snaclec rhodocetin subunit gamma (135 aa).

Intrachain disulfides connect Cys-4/Cys-15, Cys-32/Cys-129, and Cys-104/Cys-121. The 120-residue stretch at 11–130 (YDQHCYQAFN…CQAKNPFVCK (120 aa)) folds into the C-type lectin domain.

This sequence belongs to the snaclec family. As to quaternary structure, heterotetramer of subunit alpha, beta, gamma and delta; only the gamma and the delta subunits are disulfide-linked. Alpha-beta heterodimer and gamma-delta heterodimer associate orthogonally, giving a cruciform conformation. This heterotetramer may covalently dimerizes thanks to the gamma subunit. As to expression, expressed by the venom gland.

Its subcellular location is the secreted. Its function is as follows. Potent inhibitor of collagen-induced platelet aggregation. It acts by binding to the integrin alpha2A domain and blocks collagen binding to integrin alpha-2/beta-1 (ITGA2/ITGB1). The gamma/delta subunits mainly contribute to this activity. In Calloselasma rhodostoma (Malayan pit viper), this protein is Snaclec rhodocetin subunit gamma.